The sequence spans 212 residues: Thymidylate kinase (212 aa).

Position 10–17 (10–17 (GLEGAGKT)) interacts with ATP.

Belongs to the thymidylate kinase family.

It catalyses the reaction dTMP + ATP = dTDP + ADP. Functionally, phosphorylation of dTMP to form dTDP in both de novo and salvage pathways of dTTP synthesis. In Photorhabdus laumondii subsp. laumondii (strain DSM 15139 / CIP 105565 / TT01) (Photorhabdus luminescens subsp. laumondii), this protein is Thymidylate kinase.